Reading from the N-terminus, the 245-residue chain is Eukaryotic translation initiation factor 6 (245 aa).

The protein belongs to the eIF-6 family. In terms of assembly, monomer. Associates with the 60S ribosomal subunit.

It localises to the cytoplasm. It is found in the nucleus. The protein localises to the nucleolus. Its function is as follows. Binds to the 60S ribosomal subunit and prevents its association with the 40S ribosomal subunit to form the 80S initiation complex in the cytoplasm. May also be involved in ribosome biogenesis. This is Eukaryotic translation initiation factor 6 from Tetrahymena thermophila (strain SB210).